Consider the following 306-residue polypeptide: tRNA dimethylallyltransferase (306 aa).

Residue 14–21 (GPTAAGKS) participates in ATP binding. 16–21 (TAAGKS) is a substrate binding site. The tract at residues 39-42 (DSRL) is interaction with substrate tRNA.

The protein belongs to the IPP transferase family. In terms of assembly, monomer. Mg(2+) serves as cofactor.

The enzyme catalyses adenosine(37) in tRNA + dimethylallyl diphosphate = N(6)-dimethylallyladenosine(37) in tRNA + diphosphate. Its function is as follows. Catalyzes the transfer of a dimethylallyl group onto the adenine at position 37 in tRNAs that read codons beginning with uridine, leading to the formation of N6-(dimethylallyl)adenosine (i(6)A). The chain is tRNA dimethylallyltransferase from Synechococcus sp. (strain ATCC 27144 / PCC 6301 / SAUG 1402/1) (Anacystis nidulans).